A 394-amino-acid chain; its full sequence is Choline/ethanolamine kinase (394 aa).

The interval 1–42 (MAADGTGVVGGGAVGGGLPKDGLQDAKCPEPIPNRRRASSLS) is disordered. An N-acetylalanine modification is found at alanine 2. Gly residues predominate over residues 7–19 (GVVGGGAVGGGLP). Residues 75 to 81 (SGGLSNL), arginine 104, 146 to 152 (QYLPSRP), glutamine 244, and aspartate 264 contribute to the ATP site. Residue 77–79 (GLS) participates in substrate binding.

Belongs to the choline/ethanolamine kinase family. In terms of assembly, homodimer, and heterodimer with CHKA. In terms of tissue distribution, expressed ubiquitously with the highest level in testis.

It carries out the reaction choline + ATP = phosphocholine + ADP + H(+). It catalyses the reaction ethanolamine + ATP = phosphoethanolamine + ADP + H(+). Its pathway is phospholipid metabolism; phosphatidylethanolamine biosynthesis; phosphatidylethanolamine from ethanolamine: step 1/3. Its function is as follows. Has a key role in phospholipid metabolism, and catalyzes the first step of phosphatidylethanolamine and phosphatidylcholine biosynthesis. This Mus musculus (Mouse) protein is Choline/ethanolamine kinase (Chkb).